The following is a 132-amino-acid chain: uncharacterized protein (132 aa).

Residues 1 to 24 (MVTIGSSSLVLFLFFVVFVQITYT) form the signal peptide. The next 2 helical transmembrane spans lie at 75–95 (YVNVEIIVGIPLLIKAIILGI) and 112–132 (ESAILHNSINIIIIILYVYIH).

It localises to the membrane. This is an uncharacterized protein from Saccharomyces cerevisiae (strain ATCC 204508 / S288c) (Baker's yeast).